Consider the following 288-residue polypeptide: Elongation factor Ts (288 aa).

The involved in Mg(2+) ion dislocation from EF-Tu stretch occupies residues 82–85 (TDFV).

The protein belongs to the EF-Ts family.

The protein resides in the cytoplasm. Its function is as follows. Associates with the EF-Tu.GDP complex and induces the exchange of GDP to GTP. It remains bound to the aminoacyl-tRNA.EF-Tu.GTP complex up to the GTP hydrolysis stage on the ribosome. The sequence is that of Elongation factor Ts from Chlorobium phaeovibrioides (strain DSM 265 / 1930) (Prosthecochloris vibrioformis (strain DSM 265)).